The chain runs to 441 residues: Trigger factor (441 aa).

Residues 175 to 260 (GDKVVIDYNS…LVSIMVPKDV (86 aa)) form the PPIase FKBP-type domain.

Belongs to the FKBP-type PPIase family. Tig subfamily.

The protein localises to the cytoplasm. The catalysed reaction is [protein]-peptidylproline (omega=180) = [protein]-peptidylproline (omega=0). Involved in protein export. Acts as a chaperone by maintaining the newly synthesized protein in an open conformation. Functions as a peptidyl-prolyl cis-trans isomerase. This is Trigger factor from Anaplasma marginale (strain St. Maries).